We begin with the raw amino-acid sequence, 496 residues long: Lysine--tRNA ligase (496 aa).

Mg(2+)-binding residues include E408 and E415.

Belongs to the class-II aminoacyl-tRNA synthetase family. As to quaternary structure, homodimer. Mg(2+) is required as a cofactor.

The protein localises to the cytoplasm. It catalyses the reaction tRNA(Lys) + L-lysine + ATP = L-lysyl-tRNA(Lys) + AMP + diphosphate. The sequence is that of Lysine--tRNA ligase from Legionella pneumophila (strain Paris).